We begin with the raw amino-acid sequence, 379 residues long: MLDFLPFSRPAMGAEELAAVKTVLDSGWITTGPKNQELEAAFCRLTGNQYAVAVSSATAGMHIALMALGIGEGDEVITPSMTWVSTLNMIVLLGANPVMVDVDRDTLMVTPEHIEAAITPQTKAIIPVHYAGAPADLDAIYALGERYGIPVIEDAAHATGTSYKGRHIGARGTAIFSFHAIKNITCAEGGIVVTDNPQFADKLRSLKFHGLGVDAWDRQSGGRAPQAEVLAPGYKYNLPDLNAAIALAQLQKLDALNARRAAIAAQYHQAMADLPFQPLSLPSWEHIHAWHLFIIRVDEARCGITRDALMASLKTKGIGTGLHFRAAHTQKYYRERFPTLTLPDTEWNSERICSLPLFPDMTESDFDRVITALHQIAGQ.

At Lys-182 the chain carries N6-(pyridoxal phosphate)lysine.

The protein belongs to the DegT/DnrJ/EryC1 family. ArnB subfamily. In terms of assembly, homodimer. Pyridoxal 5'-phosphate is required as a cofactor.

The catalysed reaction is UDP-4-amino-4-deoxy-beta-L-arabinose + 2-oxoglutarate = UDP-beta-L-threo-pentopyranos-4-ulose + L-glutamate. It participates in nucleotide-sugar biosynthesis; UDP-4-deoxy-4-formamido-beta-L-arabinose biosynthesis; UDP-4-deoxy-4-formamido-beta-L-arabinose from UDP-alpha-D-glucuronate: step 2/3. Its pathway is bacterial outer membrane biogenesis; lipopolysaccharide biosynthesis. Catalyzes the conversion of UDP-4-keto-arabinose (UDP-Ara4O) to UDP-4-amino-4-deoxy-L-arabinose (UDP-L-Ara4N). The modified arabinose is attached to lipid A and is required for resistance to polymyxin and cationic antimicrobial peptides. This Salmonella paratyphi A (strain ATCC 9150 / SARB42) protein is UDP-4-amino-4-deoxy-L-arabinose--oxoglutarate aminotransferase.